A 313-amino-acid chain; its full sequence is tRNA dimethylallyltransferase (313 aa).

Residue 12–19 (GPTASGKS) participates in ATP binding. 14 to 19 (TASGKS) contacts substrate. 2 interaction with substrate tRNA regions span residues 37-40 (DSMQ) and 161-165 (QRSIR).

This sequence belongs to the IPP transferase family. In terms of assembly, monomer. The cofactor is Mg(2+).

The enzyme catalyses adenosine(37) in tRNA + dimethylallyl diphosphate = N(6)-dimethylallyladenosine(37) in tRNA + diphosphate. In terms of biological role, catalyzes the transfer of a dimethylallyl group onto the adenine at position 37 in tRNAs that read codons beginning with uridine, leading to the formation of N6-(dimethylallyl)adenosine (i(6)A). This Pelagibacter ubique (strain HTCC1062) protein is tRNA dimethylallyltransferase.